The following is a 308-amino-acid chain: Tyrosine recombinase XerC (308 aa).

One can recognise a Core-binding (CB) domain in the interval 20–101 (SKLHTLIDDF…SVKAFSSWAQ (82 aa)). The region spanning 122–302 (DLPKILGEQQ…SNKRLLEAFN (181 aa)) is the Tyr recombinase domain. Catalysis depends on residues Arg-163, Lys-187, His-254, Arg-257, and His-280. Tyr-289 acts as the O-(3'-phospho-DNA)-tyrosine intermediate in catalysis.

Belongs to the 'phage' integrase family. XerC subfamily. As to quaternary structure, forms a cyclic heterotetrameric complex composed of two molecules of XerC and two molecules of XerD.

It is found in the cytoplasm. Site-specific tyrosine recombinase, which acts by catalyzing the cutting and rejoining of the recombining DNA molecules. The XerC-XerD complex is essential to convert dimers of the bacterial chromosome into monomers to permit their segregation at cell division. It also contributes to the segregational stability of plasmids. This Corynebacterium glutamicum (strain ATCC 13032 / DSM 20300 / JCM 1318 / BCRC 11384 / CCUG 27702 / LMG 3730 / NBRC 12168 / NCIMB 10025 / NRRL B-2784 / 534) protein is Tyrosine recombinase XerC.